A 152-amino-acid polypeptide reads, in one-letter code: UPF0266 membrane protein YobD (152 aa).

Helical transmembrane passes span 6–26, 45–65, and 67–87; these read LVLILFIAALLAYALYDQFIM, VDSVIFVGLVAILIYNNVTSH, and AQMTTWLLSALALMGFYIFWI.

The protein belongs to the UPF0266 family.

The protein localises to the cell inner membrane. The protein is UPF0266 membrane protein YobD of Salmonella arizonae (strain ATCC BAA-731 / CDC346-86 / RSK2980).